Reading from the N-terminus, the 257-residue chain is 3-deoxy-manno-octulosonate cytidylyltransferase (257 aa).

Belongs to the KdsB family.

It localises to the cytoplasm. The enzyme catalyses 3-deoxy-alpha-D-manno-oct-2-ulosonate + CTP = CMP-3-deoxy-beta-D-manno-octulosonate + diphosphate. The protein operates within nucleotide-sugar biosynthesis; CMP-3-deoxy-D-manno-octulosonate biosynthesis; CMP-3-deoxy-D-manno-octulosonate from 3-deoxy-D-manno-octulosonate and CTP: step 1/1. It participates in bacterial outer membrane biogenesis; lipopolysaccharide biosynthesis. Activates KDO (a required 8-carbon sugar) for incorporation into bacterial lipopolysaccharide in Gram-negative bacteria. The protein is 3-deoxy-manno-octulosonate cytidylyltransferase of Methylococcus capsulatus (strain ATCC 33009 / NCIMB 11132 / Bath).